The primary structure comprises 275 residues: Light-independent protochlorophyllide reductase iron-sulfur ATP-binding protein (275 aa).

Residues G12–T17 and K41 contribute to the ATP site. S16 serves as a coordination point for Mg(2+). [4Fe-4S] cluster contacts are provided by C97 and C131. N182 to R183 serves as a coordination point for ATP.

Belongs to the NifH/BchL/ChlL family. In terms of assembly, homodimer. Protochlorophyllide reductase is composed of three subunits; BchL, BchN and BchB. [4Fe-4S] cluster is required as a cofactor.

The catalysed reaction is chlorophyllide a + oxidized 2[4Fe-4S]-[ferredoxin] + 2 ADP + 2 phosphate = protochlorophyllide a + reduced 2[4Fe-4S]-[ferredoxin] + 2 ATP + 2 H2O. Its pathway is porphyrin-containing compound metabolism; bacteriochlorophyll biosynthesis (light-independent). Its function is as follows. Component of the dark-operative protochlorophyllide reductase (DPOR) that uses Mg-ATP and reduced ferredoxin to reduce ring D of protochlorophyllide (Pchlide) to form chlorophyllide a (Chlide). This reaction is light-independent. The L component serves as a unique electron donor to the NB-component of the complex, and binds Mg-ATP. The sequence is that of Light-independent protochlorophyllide reductase iron-sulfur ATP-binding protein from Chlorobium limicola (strain DSM 245 / NBRC 103803 / 6330).